The primary structure comprises 139 residues: uncharacterized protein (139 aa).

One can recognise an HIT domain in the interval 3–110 (IFCNIVEGRD…VPTWSQDPDI (108 aa)). A Histidine triad motif motif is present at residues 95 to 99 (HSHFH).

This is an uncharacterized protein from Saccharolobus solfataricus (strain ATCC 35092 / DSM 1617 / JCM 11322 / P2) (Sulfolobus solfataricus).